The following is a 673-amino-acid chain: DNA ligase (673 aa).

Residues 32–36 (DHVYD), 81–82 (SL), and E111 contribute to the NAD(+) site. The active-site N6-AMP-lysine intermediate is K113. R134, E171, K286, and K310 together coordinate NAD(+). Zn(2+)-binding residues include C404, C407, C422, and C428. One can recognise a BRCT domain in the interval 595–673 (NIIDEYKNKT…NEFWKKDNNF (79 aa)).

It belongs to the NAD-dependent DNA ligase family. LigA subfamily. Requires Mg(2+) as cofactor. Mn(2+) serves as cofactor.

The enzyme catalyses NAD(+) + (deoxyribonucleotide)n-3'-hydroxyl + 5'-phospho-(deoxyribonucleotide)m = (deoxyribonucleotide)n+m + AMP + beta-nicotinamide D-nucleotide.. Its function is as follows. DNA ligase that catalyzes the formation of phosphodiester linkages between 5'-phosphoryl and 3'-hydroxyl groups in double-stranded DNA using NAD as a coenzyme and as the energy source for the reaction. It is essential for DNA replication and repair of damaged DNA. The sequence is that of DNA ligase from Ureaplasma urealyticum serovar 10 (strain ATCC 33699 / Western).